Consider the following 568-residue polypeptide: Probable pectinesterase/pectinesterase inhibitor 23 (568 aa).

The N-terminal stretch at 1–33 is a signal peptide; that stretch reads MGSDGDKKKKFIVAGSVSGFLVIMVVSVAVVTS. The segment at 45-198 is pectinesterase inhibitor 23; it reads RKTTKAVQAV…RELSSNSLAM (154 aa). 3 N-linked (GlcNAc...) asparagine glycosylation sites follow: asparagine 94, asparagine 210, and asparagine 316. The pectinesterase 23 stretch occupies residues 251-548; sequence PGPVKANAVV…PQDALLYTGD (298 aa). Residues threonine 333 and glutamine 363 each coordinate substrate. Aspartate 386 functions as the Proton donor; for pectinesterase activity in the catalytic mechanism. An intrachain disulfide couples cysteine 400 to cysteine 420. Aspartate 407 serves as the catalytic Nucleophile; for pectinesterase activity. Positions 475 and 477 each coordinate substrate.

The protein in the N-terminal section; belongs to the PMEI family. It in the C-terminal section; belongs to the pectinesterase family. As to expression, expressed in mature pollen grains in the anthers and on the stigma. Found in pollen tubes within the style.

Its subcellular location is the secreted. The protein localises to the cell wall. The catalysed reaction is [(1-&gt;4)-alpha-D-galacturonosyl methyl ester](n) + n H2O = [(1-&gt;4)-alpha-D-galacturonosyl](n) + n methanol + n H(+). Its pathway is glycan metabolism; pectin degradation; 2-dehydro-3-deoxy-D-gluconate from pectin: step 1/5. Acts in the modification of cell walls via demethylesterification of cell wall pectin. In Arabidopsis thaliana (Mouse-ear cress), this protein is Probable pectinesterase/pectinesterase inhibitor 23 (PME23).